Here is a 487-residue protein sequence, read N- to C-terminus: Cysteine--tRNA ligase (487 aa).

Cysteine 29 contacts Zn(2+). The short motif at 31–41 (VTVYDYNHVGH) is the 'HIGH' region element. Residues cysteine 209, histidine 234, and glutamate 238 each coordinate Zn(2+). The 'KMSKS' region signature appears at 266 to 270 (KMSKS). Lysine 269 serves as a coordination point for ATP.

The protein belongs to the class-I aminoacyl-tRNA synthetase family. As to quaternary structure, monomer. Requires Zn(2+) as cofactor.

The protein resides in the cytoplasm. The catalysed reaction is tRNA(Cys) + L-cysteine + ATP = L-cysteinyl-tRNA(Cys) + AMP + diphosphate. The chain is Cysteine--tRNA ligase from Sulfurihydrogenibium sp. (strain YO3AOP1).